We begin with the raw amino-acid sequence, 84 residues long: Beta-cardiotoxin CTX14 (84 aa).

Residues 1 to 21 (MKTLLLTLVVVTIVCLDLGYT) form the signal peptide. 4 disulfides stabilise this stretch: C24/C43, C36/C61, C65/C76, and C77/C82.

Belongs to the three-finger toxin family. Short-chain subfamily. Aminergic toxin sub-subfamily. In terms of tissue distribution, expressed by the venom gland.

The protein localises to the secreted. Acts as a beta-blocker by binding to beta-1 and beta-2 adrenergic receptors (ADRB1 and ADRB2). It dose-dependently decreases the heart rate (bradycardia), whereas conventional cardiotoxins increases it. At 100 mg/kg, intraperitoneal injection into mice provokes labored breathing, impaired locomotion, lack of response to external stimuli, and death (after 30 minutes). The polypeptide is Beta-cardiotoxin CTX14 (Ophiophagus hannah (King cobra)).